Reading from the N-terminus, the 250-residue chain is Ubiquitin-conjugating enzyme E2 6 (250 aa).

Topologically, residues 1 to 232 (MATKQAHKRL…DGKEPNDSSS (232 aa)) are cytoplasmic. The UBC core domain maps to 5-167 (QAHKRLTKEY…VQENVETLEK (163 aa)). The active-site Glycyl thioester intermediate is C87. Phosphoserine is present on S139. T178 is modified (phosphothreonine). Residues 209 to 229 (AEQALRQSENNSKKDGKEPND) are disordered. Residues 219-228 (NSKKDGKEPN) show a composition bias toward basic and acidic residues. A helical membrane pass occupies residues 233–249 (MVYIGIAIFLFLVGLFM).

Belongs to the ubiquitin-conjugating enzyme family.

Its subcellular location is the endoplasmic reticulum membrane. It carries out the reaction S-ubiquitinyl-[E1 ubiquitin-activating enzyme]-L-cysteine + [E2 ubiquitin-conjugating enzyme]-L-cysteine = [E1 ubiquitin-activating enzyme]-L-cysteine + S-ubiquitinyl-[E2 ubiquitin-conjugating enzyme]-L-cysteine.. The protein operates within protein modification; protein ubiquitination. Its function is as follows. Catalyzes the covalent attachment of ubiquitin to other proteins. Functions in degradation of misfolded or regulated proteins localized in the endoplasmic reticulum (ER) lumen or membrane via the ubiquitin-proteasome system. Cognate E2 conjugating enzyme for the DOA10 ubiquitin ligase complex, which is part of the ERAD-C pathway responsible for the rapid degradation of membrane proteins with misfolded cytoplasmic domains. This Saccharomyces cerevisiae (strain ATCC 204508 / S288c) (Baker's yeast) protein is Ubiquitin-conjugating enzyme E2 6 (UBC6).